The sequence spans 409 residues: Protein ROOT PRIMORDIUM DEFECTIVE 1 (409 aa).

Positions 47–386 (VRDHGYDNYM…RLAELVLMSP (340 aa)) constitute a PORR domain.

Expressed in roots, hypocotyls, cotyledons and shoot apex.

Functionally, involved in pre-arranging the maintenance of the active cell proliferation during root primordium development. Does not seem to be involved in cell cycle progression. The protein is Protein ROOT PRIMORDIUM DEFECTIVE 1 (RPD1) of Arabidopsis thaliana (Mouse-ear cress).